The following is a 226-amino-acid chain: Cytidylate kinase (226 aa).

10 to 18 provides a ligand contact to ATP; the sequence is GPASSGKST.

The protein belongs to the cytidylate kinase family. Type 1 subfamily.

The protein localises to the cytoplasm. The enzyme catalyses CMP + ATP = CDP + ADP. The catalysed reaction is dCMP + ATP = dCDP + ADP. The polypeptide is Cytidylate kinase (Streptococcus pyogenes serotype M5 (strain Manfredo)).